A 173-amino-acid chain; its full sequence is Photosystem I assembly protein Ycf3 (173 aa).

3 TPR repeats span residues 35-68, 72-105, and 120-153; these read AYIY…EENK, GETL…NPKQ, and GRFA…YPGG.

It belongs to the Ycf3 family.

It localises to the cellular thylakoid membrane. Its function is as follows. Essential for the assembly of the photosystem I (PSI) complex. May act as a chaperone-like factor to guide the assembly of the PSI subunits. This Prochlorococcus marinus subsp. pastoris (strain CCMP1986 / NIES-2087 / MED4) protein is Photosystem I assembly protein Ycf3.